Consider the following 30-residue polypeptide: Arsenate respiratory reductase iron-sulfur subunit ArrB (30 aa).

Cysteine 12, cysteine 15, cysteine 18, and cysteine 22 together coordinate [4Fe-4S] cluster.

As to quaternary structure, heterodimer composed of one large subunit (ArrA) and one small subunit (ArrB). It depends on [4Fe-4S] cluster as a cofactor.

The protein localises to the periplasm. Its function is as follows. Component of the arsenate respiratory reductase (Arr) complex, which catalyzes the reduction of arsenate (As(V)) to arsenite (As(III)). ArrB is probably the electron transfer subunit. The sequence is that of Arsenate respiratory reductase iron-sulfur subunit ArrB from Chrysiogenes arsenatis.